A 177-amino-acid polypeptide reads, in one-letter code: Large ribosomal subunit protein uL6 (177 aa).

Belongs to the universal ribosomal protein uL6 family. As to quaternary structure, part of the 50S ribosomal subunit.

This protein binds to the 23S rRNA, and is important in its secondary structure. It is located near the subunit interface in the base of the L7/L12 stalk, and near the tRNA binding site of the peptidyltransferase center. This chain is Large ribosomal subunit protein uL6, found in Vibrio parahaemolyticus serotype O3:K6 (strain RIMD 2210633).